Reading from the N-terminus, the 164-residue chain is Hydrogenase 2 maturation protease (164 aa).

E16, D62, and H93 together coordinate Ni(2+).

It belongs to the peptidase A31 family. Requires Ni(2+) as cofactor.

Protease involved in the C-terminal processing of HybC, the large subunit of hydrogenase 2. Specifically cleaves off a 15 amino acid peptide from the C-terminus of the precursor of HybC. The sequence is that of Hydrogenase 2 maturation protease (hybD) from Escherichia coli (strain K12).